The sequence spans 387 residues: F420-dependent formate dehydrogenase 1 subunit beta (387 aa).

2 consecutive 4Fe-4S ferredoxin-type domains span residues 275–298 and 326–355; these read TIEEWNRQWNKCIKCYGCRDVCPV and VRMSHMAFSCVNCGQCEDVCPMEIPVARIF. Residues Cys-286, Cys-289, Cys-292, Cys-296, Cys-335, Cys-338, Cys-341, and Cys-345 each coordinate [4Fe-4S] cluster. Positions 366-387 are disordered; it reads LGYRPGVDDEAPPALGGSCPTQ.

The protein belongs to the FrhB family. In terms of assembly, dimer of an alpha (FdhA1) and a beta (FdhB1) subunit. The cofactor is [4Fe-4S] cluster. Requires FAD as cofactor. It depends on Zn(2+) as a cofactor.

It catalyses the reaction oxidized coenzyme F420-(gamma-L-Glu)(n) + formate + 2 H(+) = reduced coenzyme F420-(gamma-L-Glu)(n) + CO2. Its function is as follows. Catalyzes the oxidation of formate to carbon dioxide, with coenzyme F420 as the electron acceptor. In vitro can also use methyl viologen as electron acceptor. In Methanococcus maripaludis (strain DSM 14266 / JCM 13030 / NBRC 101832 / S2 / LL), this protein is F420-dependent formate dehydrogenase 1 subunit beta.